A 375-amino-acid polypeptide reads, in one-letter code: Queuine tRNA-ribosyltransferase (375 aa).

Catalysis depends on aspartate 89, which acts as the Proton acceptor. Substrate contacts are provided by residues 89–93 (DSGGF), aspartate 143, glutamine 187, and glycine 214. Residues 245–251 (GVGKPED) are RNA binding. Aspartate 264 functions as the Nucleophile in the catalytic mechanism. Residues 269 to 273 (TRNAR) are RNA binding; important for wobble base 34 recognition. Zn(2+) is bound by residues cysteine 302, cysteine 304, cysteine 307, and histidine 333.

Belongs to the queuine tRNA-ribosyltransferase family. Homodimer. Within each dimer, one monomer is responsible for RNA recognition and catalysis, while the other monomer binds to the replacement base PreQ1. Requires Zn(2+) as cofactor.

It catalyses the reaction 7-aminomethyl-7-carbaguanine + guanosine(34) in tRNA = 7-aminomethyl-7-carbaguanosine(34) in tRNA + guanine. The protein operates within tRNA modification; tRNA-queuosine biosynthesis. Catalyzes the base-exchange of a guanine (G) residue with the queuine precursor 7-aminomethyl-7-deazaguanine (PreQ1) at position 34 (anticodon wobble position) in tRNAs with GU(N) anticodons (tRNA-Asp, -Asn, -His and -Tyr). Catalysis occurs through a double-displacement mechanism. The nucleophile active site attacks the C1' of nucleotide 34 to detach the guanine base from the RNA, forming a covalent enzyme-RNA intermediate. The proton acceptor active site deprotonates the incoming PreQ1, allowing a nucleophilic attack on the C1' of the ribose to form the product. After dissociation, two additional enzymatic reactions on the tRNA convert PreQ1 to queuine (Q), resulting in the hypermodified nucleoside queuosine (7-(((4,5-cis-dihydroxy-2-cyclopenten-1-yl)amino)methyl)-7-deazaguanosine). This Shigella flexneri serotype 5b (strain 8401) protein is Queuine tRNA-ribosyltransferase.